The chain runs to 548 residues: MPQSWEELAADKRARLAKTIPDEWKVQTLPAEDSVIDFPKKSGILSEAELKITEASAADLVSKLAAGELTSVEVTLAFCKRAAIAQQLTNCAHEFFPDAALAQARELDEYYAKHKRPVGPLHGLPISLKDQLRVKGYETSMGYISWLNKYDEGDSVLTTMLRKAGAVFYVKTSVPQTLMVCETVNNIIGRTVNPRNKNWSCGGSSGGEGAIVGIRGGVIGVGTDIGGSIRVPAAFNFLYGLRPSHGRLPYAKMANSMEGQETVHSVVGPITHSVEDLRLFTKSVLGQEPWKYDSKVIPMPWRQSESDIIASKIKNGGLNIGYYNFDGNVLPHPPILRGVETTVAALAKAGHTVTPWTPYKHDFGHDLISHIYAADGSADVMRDISASGEPAIPNIKDLLNPNIKAVNMNELWDTHLQKWNYQMEYLEKWREAEEKAGKELDAIIAPITPTAAVRHDQFRYYGYASVINLLDFTSVVVPVTFADKNIDKKNESFKAVSELDALVQEEYDPEAYHGAPVAVQVIGRRLSEERTLAIAEEVGKLLGNVVTP.

Residues lysine 129 and serine 204 each act as charge relay system in the active site. Serine 228 acts as the Acyl-ester intermediate in catalysis.

The protein belongs to the amidase family.

The enzyme catalyses a monocarboxylic acid amide + H2O = a monocarboxylate + NH4(+). It catalyses the reaction acetamide + H2O = acetate + NH4(+). Allows acetamide to be used as a sole carbon or nitrogen source. The chain is Acetamidase (amdS) from Emericella nidulans (strain FGSC A4 / ATCC 38163 / CBS 112.46 / NRRL 194 / M139) (Aspergillus nidulans).